A 140-amino-acid polypeptide reads, in one-letter code: Anti-sigma F factor (140 aa).

It belongs to the anti-sigma-factor family.

The catalysed reaction is L-seryl-[protein] + ATP = O-phospho-L-seryl-[protein] + ADP + H(+). The enzyme catalyses L-threonyl-[protein] + ATP = O-phospho-L-threonyl-[protein] + ADP + H(+). Its function is as follows. Binds to sigma F and blocks its ability to form an RNA polymerase holoenzyme (E-sigma F). Phosphorylates SpoIIAA on a serine residue. This phosphorylation may enable SpoIIAA to act as an anti-anti-sigma factor that counteracts SpoIIAB and thus releases sigma F from inhibition. The sequence is that of Anti-sigma F factor from Clostridium perfringens (strain SM101 / Type A).